The sequence spans 179 residues: Putative endogenous retrovirus group FC1 Env polyprotein (179 aa).

The N-terminal stretch at 1 to 22 (MARPSPLCLLLLLTLLPPIVPS) is a signal peptide. The tract at residues 23–179 (NSLLTEPPFR…SKLRIFRTYV (157 aa)) is truncated surface protein. N69 carries N-linked (GlcNAc...) asparagine glycosylation.

Belongs to the gamma type-C retroviral envelope protein family. HERV class-I F(c)1 env subfamily.

The protein localises to the virion. Retroviral envelope proteins mediate receptor recognition and membrane fusion during early infection. Endogenous envelope proteins may have kept, lost or modified their original function during evolution. The polypeptide is Putative endogenous retrovirus group FC1 Env polyprotein (ERVFC1) (Gorilla gorilla gorilla (Western lowland gorilla)).